Consider the following 421-residue polypeptide: Phosphatidylinositol 5-phosphate 4-kinase type-2 gamma (421 aa).

A2 is modified (N-acetylalanine). S26 carries the phosphoserine modification. A PIPK domain is found at 43–420 (AADPLVGVFL…RFLDFIANIF (378 aa)). The tract at residues 69–75 (VMLLPDD) is required for interaction with PIP5K1A. Residue S349 is modified to Phosphoserine.

As to quaternary structure, interacts with PIP5K1A; the interaction inhibits PIP5K1A kinase activity. Post-translationally, phosphorylated, phosphorylation is induced by EGF.

It localises to the endoplasmic reticulum. Its subcellular location is the cytoplasm. The enzyme catalyses a 1,2-diacyl-sn-glycero-3-phospho-(1D-myo-inositol-5-phosphate) + ATP = a 1,2-diacyl-sn-glycero-3-phospho-(1D-myo-inositol-4,5-bisphosphate) + ADP + H(+). It catalyses the reaction 1,2-dihexadecanoyl-sn-glycero-3-phospho-(1D-myo-inositol-5-phosphate) + ATP = 1,2-dihexadecanoyl-sn-glycero-3-phospho-(1D-myo-inositol-4,5-bisphosphate) + ADP + H(+). The catalysed reaction is 1,2-dihexadecanoyl-sn-glycero-3-phospho-(1D-myo-inositol-5-phosphate) + GTP = 1,2-dihexadecanoyl-sn-glycero-3-phospho-(1D-myo-inositol-4,5-bisphosphate) + GDP + H(+). Phosphatidylinositol 5-phosphate 4-kinase with low enzymatic activity. May be a GTP sensor, has higher GTP-dependent kinase activity than ATP-dependent kinase activity. PIP4Ks negatively regulate insulin signaling through a catalytic-independent mechanism. They interact with PIP5Ks and suppress PIP5K-mediated PtdIns(4,5)P2 synthesis and insulin-dependent conversion to PtdIns(3,4,5)P3. The chain is Phosphatidylinositol 5-phosphate 4-kinase type-2 gamma from Mus musculus (Mouse).